Consider the following 261-residue polypeptide: Bcl-2-binding component 3, isoforms 3/4 (261 aa).

The tract at residues 27 to 261 (QICGPRERHG…ASAGDFLCTM (235 aa)) is disordered. A compositionally biased stretch (low complexity) spans 40-50 (PGGQLPGARRG). Pro residues predominate over residues 53 to 63 (PRRPAPLPARP). Positions 64–73 (PGALGSVLRP) are enriched in low complexity. Basic residues-rich tracts occupy residues 74–87 (LRARPGCRPRRPHP) and 95–106 (RPHRPTRRHRRP). Residues 124-146 (PGRSSALALAGGAAPGVARAQRP) show a composition bias toward low complexity. The span at 147–171 (GGSGGRSHPGGPGSPRGGGTVGPGD) shows a compositional bias: gly residues. Residues 172–197 (RGPAAADGGRPQRTVRAAETRGAAAA) are compositionally biased toward low complexity.

As to quaternary structure, does not interact with BCL2.

Functionally, does not affect cell growth. The chain is Bcl-2-binding component 3, isoforms 3/4 (BBC3) from Homo sapiens (Human).